A 600-amino-acid polypeptide reads, in one-letter code: ATP-dependent RNA helicase DDX55 (600 aa).

Positions 9 to 37 match the Q motif motif; that stretch reads WESLQVPLHPRVLGALRELGFPHMTPVQS. The region spanning 40-223 is the Helicase ATP-binding domain; sequence IPLFMKNKDV…RAGLRNPVRI (184 aa). 53–60 is a binding site for ATP; sequence AVTGSGKT. A DEAD box motif is present at residues 171–174; it reads DEAD. The Helicase C-terminal domain maps to 254-402; sequence KFNQLVHFLR…EMSLQRNTID (149 aa). Residues 499–513 show a composition bias toward basic and acidic residues; the sequence is LEQKRKERSENEGRK. Residues 499 to 551 form a disordered region; that stretch reads LEQKRKERSENEGRKKFIKNKAWSKQKAKKERKKKMNAKRKKDEGSDIDDEDM. Over residues 514 to 538 the composition is skewed to basic residues; sequence KFIKNKAWSKQKAKKERKKKMNAKR. Residues 533 to 562 are important for nuclear localization; the sequence is KMNAKRKKDEGSDIDDEDMEELLNDTRLLK. Phosphoserine occurs at positions 544 and 594.

Belongs to the DEAD box helicase family. DDX55/SPB4 subfamily. In terms of assembly, interacts with 28S rRNA. Interacts with double-stranded RNA substrates in vitro; the interaction stimulates ATPase activity.

The protein localises to the nucleus. Its subcellular location is the nucleoplasm. It catalyses the reaction ATP + H2O = ADP + phosphate + H(+). Probable ATP-binding RNA helicase. Has ATPase activity and is involved in the maturation of precursor large subunit rRNAs. The protein is ATP-dependent RNA helicase DDX55 (Ddx55) of Mus musculus (Mouse).